A 122-amino-acid chain; its full sequence is Spermidine export protein MdtJ (122 aa).

The next 4 helical transmembrane spans lie at 1 to 21 (MIYW…TLSM), 31 to 51 (TGHI…SMAV), 54 to 74 (VALG…ITLF), and 81 to 101 (EPIS…IMLV).

The protein belongs to the drug/metabolite transporter (DMT) superfamily. Small multidrug resistance (SMR) (TC 2.A.7.1) family. MdtJ subfamily. As to quaternary structure, forms a complex with MdtI.

It is found in the cell inner membrane. In terms of biological role, catalyzes the excretion of spermidine. This is Spermidine export protein MdtJ from Serratia proteamaculans (strain 568).